We begin with the raw amino-acid sequence, 735 residues long: Type-3 glutamine synthetase (735 aa).

Residues 89 to 183 enclose the GS beta-grasp domain; sequence THYCHWFLPL…IPTAFCSWTG (95 aa). Residues 188 to 621 form the GS catalytic domain; that stretch reads QKTPLLRSME…SLYDLVSTLV (434 aa).

Belongs to the glutamine synthetase family. Type 3 subfamily. In terms of assembly, homohexamer.

It carries out the reaction L-glutamate + NH4(+) + ATP = L-glutamine + ADP + phosphate + H(+). The protein is Type-3 glutamine synthetase (glnA3) of Dictyostelium discoideum (Social amoeba).